We begin with the raw amino-acid sequence, 334 residues long: Ferredoxin--NADP reductase (334 aa).

FAD contacts are provided by Asp-33, Gln-41, Tyr-46, Ala-86, Phe-120, Asp-286, and Thr-327.

It belongs to the ferredoxin--NADP reductase type 2 family. As to quaternary structure, homodimer. It depends on FAD as a cofactor.

The enzyme catalyses 2 reduced [2Fe-2S]-[ferredoxin] + NADP(+) + H(+) = 2 oxidized [2Fe-2S]-[ferredoxin] + NADPH. This is Ferredoxin--NADP reductase from Rickettsia massiliae (strain Mtu5).